Reading from the N-terminus, the 158-residue chain is 2S seed storage albumin protein (158 aa).

An N-terminal signal peptide occupies residues M1 to A21. The short motif at R54–D56 is the Cell attachment site element. The propeptide occupies N65–N81.

It belongs to the 2S seed storage albumins family. As to quaternary structure, the protein consists of two chains linked by 2 disulfide bonds. In terms of tissue distribution, expressed in cotyledons. Maximal expression in parenchyma cells undergoing DNA endoreduplication and cell expansion but not in actively dividing cells of the cotyledon.

Its function is as follows. This is a 2S seed storage protein. In terms of biological role, binds to mammalian chromatin, preventing the normal formation of the kinetochore complex in the centromere and leading to the disruption of mitosis. The polypeptide is 2S seed storage albumin protein (Glycine max (Soybean)).